Reading from the N-terminus, the 211-residue chain is Transcriptional regulator NarO (211 aa).

The 52-residue stretch at 154–205 folds into the HTH bat-type domain; that stretch reads LTARQREVLETAHEMGYFEHPREANATEVAAALDINRSTFTEHLSAAQSKLL.

Its function is as follows. Activates transcription of the denitrifying genes (nitrate reductase narA and nitrite reductase nirK) under anaerobic conditions. In Haloferax volcanii (strain ATCC 29605 / DSM 3757 / JCM 8879 / NBRC 14742 / NCIMB 2012 / VKM B-1768 / DS2) (Halobacterium volcanii), this protein is Transcriptional regulator NarO.